Consider the following 410-residue polypeptide: Acetyltransferase aurG (410 aa).

The next 3 helical transmembrane spans lie at 3-23 (LWLV…VVCF), 28-48 (SLVR…GLIL), and 59-79 (WSLV…VGLI). The span at 90–99 (TSSRGGQPNA) shows a compositional bias: polar residues. A disordered region spans residues 90–112 (TSSRGGQPNASLDLAGRKKPPSS). Asparagine 98 is a glycosylation site (N-linked (GlcNAc...) asparagine). 4 helical membrane-spanning segments follow: residues 157–177 (AMTL…GGDL), 219–239 (MYFS…MVGL), 300–320 (ILAT…YSYG), and 364–384 (IGYV…FFPL).

The protein belongs to the wax synthase family.

The protein resides in the membrane. It functions in the pathway polyketide biosynthesis. Acetyltransferase; part of the gene cluster that mediates the biosynthesis of aurovertins, fungal polyketides that exhibit potent inhibition of adenosine triphosphate synthase. Tha biosynthesis starts with the HR-PKS aurA that selects propionate as the starter unit; synthesizes a hexa-ene chain through the repeated functions of the KR and DH domains in the first six iterations; selectively introduces three alpha-methyl substitutions at C4, C6, and C16 using the S-adensylmethionine-dependent cMET; and shuts off KR and DH in the last three iterations to afford a 1,3,5-triketo portion that can undergo intramolecular cyclization to yield the alpha-pyrone intermediate. AurE may act as a cyclase and enhances the rate of pyrone formation and product release of aurA. The methyltransferase aurB then methylates the C17 hydroxyl group. C17 methylation is required to initiate epoxidation by the downstream monooxygenase aurC. The monooxygenase aurC and the epoxide hydrolase aurD can iteratively transform the terminal triene portion of the methylated precursor into the dioxabicyclo[3.2.1]octane scaffold of aurovertin E. Epoxidation modifications of the precursor occur in two separate steps; bis-epoxidation of the two terminal olefins takes place first, followed by another epoxidation that occurs at C7-C8 after tetrahydrofuran formation. The O-acyltransferase aurG converts aurovertin E to aurovertin A. The polypeptide is Acetyltransferase aurG (Calcarisporium arbuscula (Dendryphion arbuscula)).